The sequence spans 173 residues: Putative metal-dependent hydrolase BC_2708 (173 aa).

The Zn(2+) site is built by His-65, His-156, and His-160.

Belongs to the metal hydrolase YfiT family. Homodimer. It depends on Zn(2+) as a cofactor.

The protein localises to the cytoplasm. Its function is as follows. Possible metal-dependent hydrolase. The protein is Putative metal-dependent hydrolase BC_2708 of Bacillus cereus (strain ATCC 14579 / DSM 31 / CCUG 7414 / JCM 2152 / NBRC 15305 / NCIMB 9373 / NCTC 2599 / NRRL B-3711).